Consider the following 961-residue polypeptide: Leucine-rich repeat-containing protein egg-6 (961 aa).

The first 18 residues, 1–18, serve as a signal peptide directing secretion; it reads MRWLTLIAVAHLIAFLSS. Residues 19–854 lie on the Extracellular side of the membrane; the sequence is AEITCPRIPE…EQNERHRNIR (836 aa). LRR repeat units lie at residues 60–78, 79–101, 103–124, 125–148, 150–172, 174–197, 199–222, 223–245, 247–269, 270–294, 305–316, 317–339, 340–363, 364–387, 388–411, 413–435, and 437–455; these read IDELHILNGTDVKIESLPF, NGLRTIAILNSTLQSFSPTAWRH, EATIEHITINGNELKTVPVFGN, LSTLMSMNLNSNQISSIPDKAFNG, SALTQLRLENNAICDFPPKSLDA, KASLVLLDVSGNCLDAIPAQILRN, ANLMYLDLGSNNISEINNFELMNL, PFLRELRVQNNTLRRIHPMAFMN, PQLQYLYLQDNIISTLDGNRLQG, FKNLEVLDVSNNALYALPSLKDLPN, ITKIETLAFSNN, PNLQLISVQNNNIVQISRNSFES, LDKLVVLLVGNNSLAKIERGMFDG, MKNLQQLSIRNNTLTALDASSFAQ, LAHLTTLDLGHNKIHDIEEGTFDK, SKLFWLDLSNNKISGFKTSVFKK, and ISNILLDGNQLICDESFNE. A helical membrane pass occupies residues 855 to 875; it reads IITAIALAFVGAVTVVVIIFF. Residues 876–961 are Cytoplasmic-facing; it reads VNYTKKQRRL…PQAVSHRSRH (86 aa). Residues 890–943 form a disordered region; sequence VYRSSPSSSGSSGQNAANESGRSSAAPSPIRPPLMNIPKTPNNRTMESTFGQPQ. Over residues 893–902 the composition is skewed to low complexity; sequence SSPSSSGSSG. Residues 928-943 show a composition bias toward polar residues; sequence KTPNNRTMESTFGQPQ.

In terms of tissue distribution, in L1 larvae, expressed in a subset of epithelial cells including epidermal, vulval and rectal cells and the excretory duct and pore. Also detected in some neurons. Absent from internal epithelia such as the gut and pharyngeal tubes.

The protein localises to the apical cell membrane. In terms of biological role, required for apical extracellular matrix organization and epithelial junction maintenance. This is Leucine-rich repeat-containing protein egg-6 from Caenorhabditis elegans.